A 249-amino-acid chain; its full sequence is Tetrahydromethanopterin S-methyltransferase subunit A (249 aa).

The Cytoplasmic portion of the chain corresponds to 2 to 225 (PEKAEPAEGW…YMAGYLSGRT (224 aa)). Residue histidine 88 participates in 5-hydroxybenzimidazolylcob(I)amide binding. A helical membrane pass occupies residues 226–246 (MGLLIGIISGMIFLFLPMVVL). Residues 247–249 (GGV) are Extracellular-facing.

It belongs to the MtrA family. The complex is composed of 8 subunits; MtrA, MtrB, MtrC, MtrD, MtrE, MtrF, MtrG and MtrH. Requires 5-hydroxybenzimidazolylcob(I)amide as cofactor.

The protein localises to the cell membrane. The catalysed reaction is 5-methyl-5,6,7,8-tetrahydromethanopterin + coenzyme M + 2 Na(+)(in) = 5,6,7,8-tetrahydromethanopterin + methyl-coenzyme M + 2 Na(+)(out). Its pathway is one-carbon metabolism; methanogenesis from CO(2); methyl-coenzyme M from 5,10-methylene-5,6,7,8-tetrahydromethanopterin: step 2/2. Functionally, part of a complex that catalyzes the formation of methyl-coenzyme M and tetrahydromethanopterin from coenzyme M and methyl-tetrahydromethanopterin. This is an energy-conserving, sodium-ion translocating step. The protein is Tetrahydromethanopterin S-methyltransferase subunit A of Methanopyrus kandleri (strain AV19 / DSM 6324 / JCM 9639 / NBRC 100938).